The primary structure comprises 852 residues: Lon protease homolog 2, peroxisomal (852 aa).

N-acetylserine is present on S2. The region spanning 13-222 (LPLLLTHEGV…MTIPLLVRQI (210 aa)) is the Lon N-terminal domain. 375–382 (GPPGVGKT) is an ATP binding site. The Lon proteolytic domain maps to 651–837 (LSQPGVAIGL…DEVLNAAFDG (187 aa)). Residues S743 and K786 contribute to the active site. A Microbody targeting signal motif is present at residues 850–852 (SKL).

The protein belongs to the peptidase S16 family. Interacts with PEX5. Interacts with TYSND1. May interact with enzymes involved in beta-oxidation of fatty acids, including ACOX1/AOX.

The protein localises to the peroxisome matrix. It catalyses the reaction Hydrolysis of proteins in presence of ATP.. In terms of biological role, ATP-dependent serine protease that mediates the selective degradation of misfolded and unassembled polypeptides in the peroxisomal matrix. Necessary for type 2 peroxisome targeting signal (PTS2)-containing protein processing and facilitates peroxisome matrix protein import. May indirectly regulate peroxisomal fatty acid beta-oxidation through degradation of the self-processed forms of TYSND1. The polypeptide is Lon protease homolog 2, peroxisomal (Bos taurus (Bovine)).